A 326-amino-acid polypeptide reads, in one-letter code: L-carnitine dehydrogenase (326 aa).

An NAD(+)-binding site is contributed by 19-24; sequence GTGVIG.

The protein belongs to the 3-hydroxyacyl-CoA dehydrogenase family. L-carnitine dehydrogenase subfamily. In terms of assembly, homodimer.

It is found in the cytoplasm. The enzyme catalyses carnitine + NAD(+) = 3-dehydrocarnitine + NADH + H(+). Its pathway is amine and polyamine metabolism; carnitine metabolism. Catalyzes the NAD(+)-dependent oxidation of L-carnitine to 3-dehydrocarnitine. The polypeptide is L-carnitine dehydrogenase (Bacillus cereus (strain ZK / E33L)).